A 107-amino-acid chain; its full sequence is Protein beta (107 aa).

The polypeptide is Protein beta (beta) (Bovine ephemeral fever virus (strain BB7721) (BEFV)).